The following is a 450-amino-acid chain: Phosphoglucosamine mutase (450 aa).

Ser-102 functions as the Phosphoserine intermediate in the catalytic mechanism. Positions 102, 243, 245, and 247 each coordinate Mg(2+). Ser-102 carries the phosphoserine modification.

The protein belongs to the phosphohexose mutase family. Mg(2+) is required as a cofactor. Post-translationally, activated by phosphorylation.

It catalyses the reaction alpha-D-glucosamine 1-phosphate = D-glucosamine 6-phosphate. Catalyzes the conversion of glucosamine-6-phosphate to glucosamine-1-phosphate. This chain is Phosphoglucosamine mutase, found in Allorhizobium ampelinum (strain ATCC BAA-846 / DSM 112012 / S4) (Agrobacterium vitis (strain S4)).